We begin with the raw amino-acid sequence, 332 residues long: MRTKIAIPMGDPAGVGPEIVVKTAVSKEILDLCDLVVIGDKKVLEKATKICQVDLKIHTIKNIEEGKYEKGILNVIDLENVDMNTLEYGQVQGMCGKAAFEYIKKCVELAMEYKVDAIATTPINKESLRAGNVNYIGHTEILGDLSNSRDPLTMFEVDNMRVFFLTRHMSLRKACDAITKERVLEYIERCTKALKQLGVTGKMAVAGLNPHSGEHGLFGNEEVKEITPAIEEAQKLGYDVVGPIGADSVFHQALQGRYVAVLSLYHDQGHIATKTYDFERTIAITLDMPFLRTSVDHGTAFDIAGKGIVSAISMIEAVKLAAKYAPNFKNIK.

Residues His138 and Thr139 each coordinate substrate. A divalent metal cation is bound by residues His168, His211, and His266. Positions 274 and 292 each coordinate substrate.

This sequence belongs to the PdxA family. PdxA2 subfamily. As to quaternary structure, homodimer. A divalent metal cation serves as cofactor.

It carries out the reaction 4-O-phospho-D-threonate + NAD(+) = dihydroxyacetone phosphate + CO2 + NADH. Its function is as follows. Catalyzes the NAD-dependent oxidation and subsequent decarboxylation of D-threonate 4-phosphate to produce dihydroxyacetone phosphate (DHAP). This chain is Putative D-threonate 4-phosphate dehydrogenase, found in Fusobacterium nucleatum subsp. nucleatum (strain ATCC 25586 / DSM 15643 / BCRC 10681 / CIP 101130 / JCM 8532 / KCTC 2640 / LMG 13131 / VPI 4355).